The chain runs to 174 residues: Transcription antitermination protein NusB (174 aa).

The disordered stretch occupies residues 1 to 28; it reads MVEPKKPFMRKPPPKTGDKKPGDRKANR. Residues 16-25 are compositionally biased toward basic and acidic residues; the sequence is TGDKKPGDRK.

The protein belongs to the NusB family.

Involved in transcription antitermination. Required for transcription of ribosomal RNA (rRNA) genes. Binds specifically to the boxA antiterminator sequence of the ribosomal RNA (rrn) operons. In Rhodopseudomonas palustris (strain BisB5), this protein is Transcription antitermination protein NusB.